The chain runs to 154 residues: MIGYLFGNRVLVDDKELPLIEAYYLLDKGELEVYEDDKKLSKEEFLKKCLTYDERFLIRYKAYKELRDKGYTLGTALKFGADFRVYDIGVIPKKGKRSEREHSKWVLYPVSKDETFDFYEFASKNRVAHSTRKKLLLGIVSDKIEFIEVSWKKP.

Residues Tyr-86, His-102, and Lys-133 contribute to the active site.

Belongs to the tRNA-intron endonuclease family. Archaeal short subfamily. Homotetramer; although the tetramer contains four active sites, only two participate in the cleavage. Therefore, it should be considered as a dimer of dimers.

The catalysed reaction is pretRNA = a 3'-half-tRNA molecule with a 5'-OH end + a 5'-half-tRNA molecule with a 2',3'-cyclic phosphate end + an intron with a 2',3'-cyclic phosphate and a 5'-hydroxyl terminus.. Endonuclease that removes tRNA introns. Cleaves pre-tRNA at the 5'- and 3'-splice sites to release the intron. The products are an intron and two tRNA half-molecules bearing 2',3' cyclic phosphate and 5'-OH termini. Recognizes a pseudosymmetric substrate in which 2 bulged loops of 3 bases are separated by a stem of 4 bp. The protein is tRNA-splicing endonuclease of Nanoarchaeum equitans (strain Kin4-M).